Here is a 520-residue protein sequence, read N- to C-terminus: GMP synthase [glutamine-hydrolyzing] (520 aa).

One can recognise a Glutamine amidotransferase type-1 domain in the interval 3–200 (AIAIIDFGSQ…FLDIANCKRD (198 aa)). The Nucleophile role is filled by C84. Residues H175 and E177 contribute to the active site. In terms of domain architecture, GMPS ATP-PPase spans 201 to 386 (WTMKSIIEKQ…IGLSNEIIFQ (186 aa)). 228–234 (SGGVDSS) is an ATP binding site.

In terms of assembly, homodimer.

It catalyses the reaction XMP + L-glutamine + ATP + H2O = GMP + L-glutamate + AMP + diphosphate + 2 H(+). It functions in the pathway purine metabolism; GMP biosynthesis; GMP from XMP (L-Gln route): step 1/1. Functionally, catalyzes the synthesis of GMP from XMP. In Wolbachia sp. subsp. Brugia malayi (strain TRS), this protein is GMP synthase [glutamine-hydrolyzing].